Reading from the N-terminus, the 694-residue chain is Putative serine/threonine-protein kinase R679 (694 aa).

A Protein kinase domain is found at 167–548 (ITKNKTVGKG…ITNILKHLFT (382 aa)). Residues 173–181 (VGKGAAGIA) and Lys-196 contribute to the ATP site. Asp-395 (proton acceptor) is an active-site residue.

Belongs to the protein kinase superfamily. Ser/Thr protein kinase family.

The protein resides in the virion. The enzyme catalyses L-seryl-[protein] + ATP = O-phospho-L-seryl-[protein] + ADP + H(+). It catalyses the reaction L-threonyl-[protein] + ATP = O-phospho-L-threonyl-[protein] + ADP + H(+). The polypeptide is Putative serine/threonine-protein kinase R679 (Acanthamoeba polyphaga (Amoeba)).